We begin with the raw amino-acid sequence, 812 residues long: DNA translocase FtsK 1 (812 aa).

The span at 1 to 11 shows a compositional bias: basic residues; the sequence is MTEKSHKKTAK. The disordered stretch occupies residues 1 to 36; that stretch reads MTEKSHKKTAKGRAGSPSPTSARNKKADNGARGNKV. Residues 25–36 show a composition bias toward basic and acidic residues; sequence KKADNGARGNKV. A run of 5 helical transmembrane segments spans residues 63 to 83, 116 to 136, 156 to 176, 184 to 204, and 210 to 230; these read IGDA…ISLI, VGYY…CVML, IAAA…YFVL, LPVG…AWLL, and LLII…ISWL. Residues 231-812 lie on the Cytoplasmic side of the membrane; it reads EFLNGAGRAV…RKILAHKDHL (582 aa). The FtsK domain maps to 461–670; that stretch reads GTPVVGDLAK…FTVQSKIDSR (210 aa). 481–486 is an ATP binding site; it reads GSGKSV.

The protein belongs to the FtsK/SpoIIIE/SftA family. Homohexamer. Forms a ring that surrounds DNA.

Its subcellular location is the cell inner membrane. In terms of biological role, essential cell division protein that coordinates cell division and chromosome segregation. The N-terminus is involved in assembly of the cell-division machinery. The C-terminus functions as a DNA motor that moves dsDNA in an ATP-dependent manner towards the dif recombination site, which is located within the replication terminus region. Translocation stops specifically at Xer-dif sites, where FtsK interacts with the Xer recombinase, allowing activation of chromosome unlinking by recombination. FtsK orienting polar sequences (KOPS) guide the direction of DNA translocation. FtsK can remove proteins from DNA as it translocates, but translocation stops specifically at XerCD-dif site, thereby preventing removal of XerC and XerD from dif. This Neisseria meningitidis serogroup A / serotype 4A (strain DSM 15465 / Z2491) protein is DNA translocase FtsK 1 (ftsK1).